A 231-amino-acid chain; its full sequence is Cytidylate kinase (231 aa).

Position 11–19 (11–19 (GHSSCGKST)) interacts with ATP.

This sequence belongs to the cytidylate kinase family. Type 1 subfamily.

Its subcellular location is the cytoplasm. It catalyses the reaction CMP + ATP = CDP + ADP. It carries out the reaction dCMP + ATP = dCDP + ADP. In Porphyromonas gingivalis (strain ATCC BAA-308 / W83), this protein is Cytidylate kinase.